The chain runs to 171 residues: Phosphopantetheine adenylyltransferase (171 aa).

Threonine 9 serves as a coordination point for substrate. Residues 9 to 10 and histidine 17 contribute to the ATP site; that span reads TF. Residues lysine 41, leucine 73, and arginine 87 each coordinate substrate. Residues 88-90, glutamate 98, and 123-129 contribute to the ATP site; these read GLR and YQFISGT.

The protein belongs to the bacterial CoaD family. In terms of assembly, homohexamer. It depends on Mg(2+) as a cofactor.

It localises to the cytoplasm. It catalyses the reaction (R)-4'-phosphopantetheine + ATP + H(+) = 3'-dephospho-CoA + diphosphate. The protein operates within cofactor biosynthesis; coenzyme A biosynthesis; CoA from (R)-pantothenate: step 4/5. Reversibly transfers an adenylyl group from ATP to 4'-phosphopantetheine, yielding dephospho-CoA (dPCoA) and pyrophosphate. This Paraburkholderia phytofirmans (strain DSM 17436 / LMG 22146 / PsJN) (Burkholderia phytofirmans) protein is Phosphopantetheine adenylyltransferase.